The sequence spans 157 residues: Protein-export protein SecB (157 aa).

This sequence belongs to the SecB family. In terms of assembly, homotetramer, a dimer of dimers. One homotetramer interacts with 1 SecA dimer.

It localises to the cytoplasm. Functionally, one of the proteins required for the normal export of preproteins out of the cell cytoplasm. It is a molecular chaperone that binds to a subset of precursor proteins, maintaining them in a translocation-competent state. It also specifically binds to its receptor SecA. This is Protein-export protein SecB from Tolumonas auensis (strain DSM 9187 / NBRC 110442 / TA 4).